The following is a 323-amino-acid chain: Protein REDOX 2 (323 aa).

Residue Asp53 participates in NADP(+) binding. The active-site Proton donor is the Tyr58. A substrate-binding site is contributed by His121. NADP(+)-binding positions include 167–168, Gln189, 215–220, and 289–297; these read SN, WSPLLS, and DQIHEIPQR. Residues 302–323 form a disordered region; that stretch reads GEEFMHPEGPIKSPEELWDGDL.

This sequence belongs to the aldo/keto reductase family. In terms of assembly, monomer. As to expression, expressed in leaf epidermis.

It catalyses the reaction 15alpha-stemmadenine + NADP(+) = 17-dehydrostemmadenine + NADPH + 2 H(+). The protein operates within alkaloid biosynthesis. Its function is as follows. Component of iboga and aspidosperma monoterpenoid indole alkaloids (MIAs, e.g. tabersonine and catharanthine) biosynthesis pathway from 19E-geissoschizine. Catalyzes the second oxidation step of the unstable intermediate product resulting from the reaction triggered by the geissoschizine oxidase (GO) in the stemmadenine biosynthesis process from 19E-geissoschizine. In Catharanthus roseus (Madagascar periwinkle), this protein is Protein REDOX 2.